A 392-amino-acid polypeptide reads, in one-letter code: Cobalt-precorrin-5B C(1)-methyltransferase (392 aa).

Belongs to the CbiD family.

The enzyme catalyses Co-precorrin-5B + S-adenosyl-L-methionine = Co-precorrin-6A + S-adenosyl-L-homocysteine. Its pathway is cofactor biosynthesis; adenosylcobalamin biosynthesis; cob(II)yrinate a,c-diamide from sirohydrochlorin (anaerobic route): step 6/10. Catalyzes the methylation of C-1 in cobalt-precorrin-5B to form cobalt-precorrin-6A. The polypeptide is Cobalt-precorrin-5B C(1)-methyltransferase (Pelobacter propionicus (strain DSM 2379 / NBRC 103807 / OttBd1)).